Consider the following 155-residue polypeptide: Ribosomal RNA large subunit methyltransferase H (155 aa).

S-adenosyl-L-methionine is bound by residues glycine 104 and 123–128 (LSAMTF).

It belongs to the RNA methyltransferase RlmH family. In terms of assembly, homodimer.

Its subcellular location is the cytoplasm. The enzyme catalyses pseudouridine(1915) in 23S rRNA + S-adenosyl-L-methionine = N(3)-methylpseudouridine(1915) in 23S rRNA + S-adenosyl-L-homocysteine + H(+). Functionally, specifically methylates the pseudouridine at position 1915 (m3Psi1915) in 23S rRNA. The sequence is that of Ribosomal RNA large subunit methyltransferase H from Oleidesulfovibrio alaskensis (strain ATCC BAA-1058 / DSM 17464 / G20) (Desulfovibrio alaskensis).